The sequence spans 440 residues: Proline--tRNA ligase (440 aa).

It belongs to the class-II aminoacyl-tRNA synthetase family. ProS type 2 subfamily. As to quaternary structure, homodimer.

It is found in the cytoplasm. The catalysed reaction is tRNA(Pro) + L-proline + ATP = L-prolyl-tRNA(Pro) + AMP + diphosphate. Catalyzes the attachment of proline to tRNA(Pro) in a two-step reaction: proline is first activated by ATP to form Pro-AMP and then transferred to the acceptor end of tRNA(Pro). In Rhizobium johnstonii (strain DSM 114642 / LMG 32736 / 3841) (Rhizobium leguminosarum bv. viciae), this protein is Proline--tRNA ligase.